Here is a 686-residue protein sequence, read N- to C-terminus: Pollen receptor-like kinase 5 (686 aa).

The N-terminal stretch at 1-39 is a signal peptide; that stretch reads MRNWEDPFTLACNTALKKNLPSCIFIIIFISVLCPVAMS. Residues 40–283 are Extracellular-facing; that stretch reads QVVVPDSDAD…GKKAGSFYTL (244 aa). Residue asparagine 60 is glycosylated (N-linked (GlcNAc...) asparagine). 5 LRR repeats span residues 112 to 135, 136 to 159, 161 to 184, 185 to 208, and 210 to 230; these read MKNLRTISFMNNNFNGPMPQVKRF, TSLKSLYLSNNRFSGEIPADAFLG, PLLKKILLANNAFRGTIPSSLASL, PMLLELRLNGNQFQGQIPSFQQKD, and KLASFENNDLDGPIPESLRNM. Residues 284 to 304 form a helical membrane-spanning segment; sequence AIILIVIGIILVIIALVFCFV. The Cytoplasmic portion of the chain corresponds to 305 to 686; the sequence is QSRRRNFLSA…DDDFGFSMNR (382 aa). Polar residues predominate over residues 328-339; that stretch reads NYHQSTNKNNKP. Residues 328–355 are disordered; the sequence is NYHQSTNKNNKPAESVNHTRRGSMPDPG. Residues 375 to 648 enclose the Protein kinase domain; the sequence is RASAEVLGSG…REVVEMVEML (274 aa). Position 377 is a phosphoserine (serine 377). ATP-binding positions include 381 to 389 and lysine 403; that span reads LGSGTFGAS. Residues serine 455 and serine 458 each carry the phosphoserine modification. A Phosphothreonine modification is found at threonine 472. At tyrosine 542 the chain carries Phosphotyrosine. Serine 545 is modified (phosphoserine).

It belongs to the protein kinase superfamily. Ser/Thr protein kinase family. As to quaternary structure, interacts with the GRI peptide. In terms of tissue distribution, expressed in pollen and/or in flowers. Detected at low levels in leaves.

The protein localises to the cell membrane. The catalysed reaction is L-seryl-[protein] + ATP = O-phospho-L-seryl-[protein] + ADP + H(+). The enzyme catalyses L-threonyl-[protein] + ATP = O-phospho-L-threonyl-[protein] + ADP + H(+). Receptor-like kinase involved in the control of pollen germination and pollen tube polar growth. The extracellular domain serves as a sensor for peptides derived from GRI. May act as a downstream element for ROS-dependent cell death induced by GRI. In Arabidopsis thaliana (Mouse-ear cress), this protein is Pollen receptor-like kinase 5.